We begin with the raw amino-acid sequence, 608 residues long: Myosin light chain kinase 2, skeletal/cardiac muscle (608 aa).

The tract at residues 1-160 (MATENGAVEL…RGSPAFLHSP (160 aa)) is disordered. N-acetylalanine is present on Ala-2. 2 stretches are compositionally biased toward basic and acidic residues: residues 31-43 (AAEK…DPEK) and 50-63 (TKQD…KKDA). Gly residues predominate over residues 82 to 91 (GSQGPAGEGG). The segment covering 116–127 (ASEKKPEAEKGP) has biased composition (basic and acidic residues). Residues Ser-153, Ser-159, and Ser-161 each carry the phosphoserine modification. Positions 214–235 (QKEAGEKAPGQADQAKVQGDTS) are disordered. One can recognise a Protein kinase domain in the interval 297 to 552 (MNSKEALGGG…AAQCLAHPWL (256 aa)). Residues 303 to 311 (LGGGKFGAV) and Lys-326 each bind ATP. The Proton acceptor role is filled by Asp-418. Thr-457 is subject to Phosphothreonine. The segment at 586–598 (IAVSAANRFKKIS) is calmodulin-binding.

This sequence belongs to the protein kinase superfamily. CAMK Ser/Thr protein kinase family. May interact with centrin.

The protein localises to the cytoplasm. It carries out the reaction L-seryl-[myosin light chain] + ATP = O-phospho-L-seryl-[myosin light chain] + ADP + H(+). The catalysed reaction is L-threonyl-[myosin light chain] + ATP = O-phospho-L-threonyl-[myosin light chain] + ADP + H(+). In terms of biological role, implicated in the level of global muscle contraction and cardiac function. Phosphorylates a specific serine in the N-terminus of a myosin light chain. This chain is Myosin light chain kinase 2, skeletal/cardiac muscle (MYLK2), found in Oryctolagus cuniculus (Rabbit).